The primary structure comprises 251 residues: NADPH-dependent oxidoreductase (251 aa).

Belongs to the flavin oxidoreductase frp family. Requires FMN as cofactor.

In terms of biological role, reduces FMN, organic nitro compounds and disulfide DTNB. Involved in maintenance of the cellular redox state and the disulfide stress response. The polypeptide is NADPH-dependent oxidoreductase (nfrA) (Staphylococcus epidermidis (strain ATCC 12228 / FDA PCI 1200)).